Reading from the N-terminus, the 112-residue chain is MDSGDGYNTYSYEEGAGDAKKEVLYKIGIIMLCIVGIVVLWVLIILCCAVPRYAKSTMDAWLSSSSIMKRKMASRITGTPFEETGPHRERRWAERRTEATNQNNNDNVNRFS.

The helical transmembrane segment at 27-47 (IGIIMLCIVGIVVLWVLIILC) threads the bilayer. The tract at residues 77-112 (TGTPFEETGPHRERRWAERRTEATNQNNNDNVNRFS) is disordered. The segment covering 84 to 98 (TGPHRERRWAERRTE) has biased composition (basic and acidic residues). The segment covering 101 to 112 (NQNNNDNVNRFS) has biased composition (polar residues).

Belongs to the nanovirus movement protein family.

It localises to the host cell membrane. May transport viral genome to neighboring plant cells directly through plasmosdesmata, without any budding. The movement protein allows efficient cell to cell propagation, by bypassing the host cell wall barrier. This is Putative movement protein (DNA-M) from Subterranean clover stunt virus (strain F) (SCSV).